A 243-amino-acid polypeptide reads, in one-letter code: GrpE protein homolog, mitochondrial (243 aa).

Residues 42 to 75 form a disordered region; sequence TEASKKEGKEDKAEAQGSQEPETAAETNKEAEGA. A compositionally biased stretch (basic and acidic residues) spans 44–55; that stretch reads ASKKEGKEDKAE.

It belongs to the GrpE family. Component of the PAM complex, at least composed of mtHsp70, MGE1, TIM44, PAM16, PAM17 and PAM18.

Its subcellular location is the mitochondrion matrix. In terms of biological role, essential component of the PAM complex, a complex required for the translocation of transit peptide-containing proteins from the inner membrane into the mitochondrial matrix in an ATP-dependent manner. Seems to control the nucleotide-dependent binding of SSC1 to substrate proteins. The polypeptide is GrpE protein homolog, mitochondrial (mge1) (Debaryomyces hansenii (strain ATCC 36239 / CBS 767 / BCRC 21394 / JCM 1990 / NBRC 0083 / IGC 2968) (Yeast)).